We begin with the raw amino-acid sequence, 129 residues long: ATP synthase epsilon chain (129 aa).

It belongs to the ATPase epsilon chain family. In terms of assembly, F-type ATPases have 2 components, CF(1) - the catalytic core - and CF(0) - the membrane proton channel. CF(1) has five subunits: alpha(3), beta(3), gamma(1), delta(1), epsilon(1). CF(0) has three main subunits: a, b and c.

It is found in the cell inner membrane. Its function is as follows. Produces ATP from ADP in the presence of a proton gradient across the membrane. This chain is ATP synthase epsilon chain, found in Campylobacter curvus (strain 525.92).